A 242-amino-acid polypeptide reads, in one-letter code: Haloacid dehalogenase-like hydrolase domain-containing protein 3 (242 aa).

This sequence belongs to the HAD-like hydrolase superfamily.

The sequence is that of Haloacid dehalogenase-like hydrolase domain-containing protein 3 (hdhd3) from Danio rerio (Zebrafish).